Reading from the N-terminus, the 505-residue chain is Bile acid-sensitive ion channel (505 aa).

A binds the plasma membrane and stabilizes the channel in the closed state region spans residues 1–30 (MEQTEKSKVYAENGLLEKIKLCLSKKPLPS). Topologically, residues 1-61 (MEQTEKSKVY…NIVQNRSKIR (61 aa)) are cytoplasmic. Residues 62–82 (RVLWLVVVLGSVSLVTWQIYI) traverse the membrane as a helical segment. Residues 83 to 459 (RLLNYFTWPT…GLFCGASLIT (377 aa)) are Extracellular-facing. 6 disulfides stabilise this stretch: C112-C207, C185-C192, C298-C377, C315-C373, C328-C350, and C330-C342. N147, N163, N178, and N179 each carry an N-linked (GlcNAc...) asparagine glycan. An N-linked (GlcNAc...) asparagine glycan is attached at N306. N-linked (GlcNAc...) asparagine glycans are attached at residues N370, N405, and N421. The GAS motif; ion selectivity filter signature appears at 454–456 (GAS). The chain crosses the membrane as a helical span at residues 460-480 (IIEIIEYLFTNFYWICIFFLL). Residues 481–505 (KISEMTQWTPPPQNHLGNKNRIEEC) are Cytoplasmic-facing.

Belongs to the amiloride-sensitive sodium channel (TC 1.A.6) family. ASIC5 subfamily. In terms of assembly, forms homotrimeric channels. In terms of tissue distribution, detected in small intestine, duodenum and jejunum. Detected at very low levels in testis and rectum.

The protein resides in the apical cell membrane. Its subcellular location is the cell membrane. It carries out the reaction Na(+)(in) = Na(+)(out). The catalysed reaction is Li(+)(in) = Li(+)(out). It catalyses the reaction K(+)(in) = K(+)(out). The enzyme catalyses H(+)(in) = H(+)(out). Its activity is regulated as follows. Inhibited by the diuretic drug amiloride. Functionally, forms bile acid-gated sodium channels and may play a role in bile acid-dependent absorption and secretion by epithelial cells of the bile ducts. Displays high selectivity for sodium ions but can also permit the permeation of other cations. The gating could be indirect and the consequence of alterations of the membrane environment of the channel by bile acids. As a sodium channel of type II unipolar brush cells of the vestibulocerebellum, controlling the electrical activity of these cells, could play a role in motor coordination and balance. The chain is Bile acid-sensitive ion channel from Homo sapiens (Human).